A 434-amino-acid chain; its full sequence is Methylenetetrahydrofolate--tRNA-(uracil-5-)-methyltransferase TrmFO (434 aa).

9–14 (GAGLAG) provides a ligand contact to FAD.

It belongs to the MnmG family. TrmFO subfamily. FAD serves as cofactor.

The protein resides in the cytoplasm. It catalyses the reaction uridine(54) in tRNA + (6R)-5,10-methylene-5,6,7,8-tetrahydrofolate + NADH + H(+) = 5-methyluridine(54) in tRNA + (6S)-5,6,7,8-tetrahydrofolate + NAD(+). It carries out the reaction uridine(54) in tRNA + (6R)-5,10-methylene-5,6,7,8-tetrahydrofolate + NADPH + H(+) = 5-methyluridine(54) in tRNA + (6S)-5,6,7,8-tetrahydrofolate + NADP(+). Functionally, catalyzes the folate-dependent formation of 5-methyl-uridine at position 54 (M-5-U54) in all tRNAs. The polypeptide is Methylenetetrahydrofolate--tRNA-(uracil-5-)-methyltransferase TrmFO (Listeria monocytogenes serovar 1/2a (strain ATCC BAA-679 / EGD-e)).